The primary structure comprises 413 residues: Probable protein phosphatase 2C 78 (413 aa).

Residues K21–R40 are disordered. Residues K111 to L409 enclose the PPM-type phosphatase domain. Mn(2+) contacts are provided by D153, G154, D327, and D400.

This sequence belongs to the PP2C family. Requires Mg(2+) as cofactor. It depends on Mn(2+) as a cofactor.

The protein localises to the golgi apparatus. It localises to the nucleus. It carries out the reaction O-phospho-L-seryl-[protein] + H2O = L-seryl-[protein] + phosphate. The catalysed reaction is O-phospho-L-threonyl-[protein] + H2O = L-threonyl-[protein] + phosphate. In terms of biological role, acts as a negative regulator of abscisic acid (ABA) signaling for stomatal closure in leaves, and controls water loss during leaf senescence. Activated by the NAC029/NAP transcription factor during ABA signaling in senescing leaves. Functions as a negative regulator of osmotic stress and ABA signaling. Acts as a negative regulator of response to drought. In Arabidopsis thaliana (Mouse-ear cress), this protein is Probable protein phosphatase 2C 78.